Consider the following 124-residue polypeptide: Small ribosomal subunit protein uS12 (124 aa).

A disordered region spans residues M1–C27. Polar residues predominate over residues E17 to C27. D89 bears the 3-methylthioaspartic acid mark.

This sequence belongs to the universal ribosomal protein uS12 family. Part of the 30S ribosomal subunit. Contacts proteins S8 and S17. May interact with IF1 in the 30S initiation complex.

Its function is as follows. With S4 and S5 plays an important role in translational accuracy. Functionally, interacts with and stabilizes bases of the 16S rRNA that are involved in tRNA selection in the A site and with the mRNA backbone. Located at the interface of the 30S and 50S subunits, it traverses the body of the 30S subunit contacting proteins on the other side and probably holding the rRNA structure together. The combined cluster of proteins S8, S12 and S17 appears to hold together the shoulder and platform of the 30S subunit. This chain is Small ribosomal subunit protein uS12, found in Borreliella afzelii (strain PKo) (Borrelia afzelii).